A 206-amino-acid chain; its full sequence is Pyridoxine/pyridoxamine 5'-phosphate oxidase (206 aa).

Residues 53–58 (RMVLLK), 68–69 (YT), Lys75, and Gln97 contribute to the FMN site. Residue Lys58 coordinates substrate. Tyr115, Arg119, and Ser123 together coordinate substrate. FMN contacts are provided by residues 132–133 (QS) and Trp177. Position 183 to 185 (183 to 185 (RLH)) interacts with substrate. Arg187 lines the FMN pocket.

It belongs to the pyridoxamine 5'-phosphate oxidase family. In terms of assembly, homodimer. FMN serves as cofactor.

The enzyme catalyses pyridoxamine 5'-phosphate + O2 + H2O = pyridoxal 5'-phosphate + H2O2 + NH4(+). The catalysed reaction is pyridoxine 5'-phosphate + O2 = pyridoxal 5'-phosphate + H2O2. The protein operates within cofactor metabolism; pyridoxal 5'-phosphate salvage; pyridoxal 5'-phosphate from pyridoxamine 5'-phosphate: step 1/1. Its pathway is cofactor metabolism; pyridoxal 5'-phosphate salvage; pyridoxal 5'-phosphate from pyridoxine 5'-phosphate: step 1/1. In terms of biological role, catalyzes the oxidation of either pyridoxine 5'-phosphate (PNP) or pyridoxamine 5'-phosphate (PMP) into pyridoxal 5'-phosphate (PLP). In Agrobacterium fabrum (strain C58 / ATCC 33970) (Agrobacterium tumefaciens (strain C58)), this protein is Pyridoxine/pyridoxamine 5'-phosphate oxidase.